The chain runs to 205 residues: Peptidyl-prolyl cis-trans isomerase B (205 aa).

A signal peptide spans 1-20 (MKFSGLWCWLLLFLSVNVIA). The region spanning 39-198 (FFDIEHGEEK…EAVKIAKCGE (160 aa)) is the PPIase cyclophilin-type domain.

Belongs to the cyclophilin-type PPIase family. PPIase B subfamily.

It is found in the secreted. The enzyme catalyses [protein]-peptidylproline (omega=180) = [protein]-peptidylproline (omega=0). Its activity is regulated as follows. Cyclosporin A (CsA) inhibits CYPB. PPIases accelerate the folding of proteins. It catalyzes the cis-trans isomerization of proline imidic peptide bonds in oligopeptides. The chain is Peptidyl-prolyl cis-trans isomerase B (CPR2) from Saccharomyces cerevisiae (strain ATCC 204508 / S288c) (Baker's yeast).